The chain runs to 353 residues: Protein RecA (353 aa).

67-74 (GPESSGKT) serves as a coordination point for ATP.

Belongs to the RecA family.

Its subcellular location is the cytoplasm. Its function is as follows. Can catalyze the hydrolysis of ATP in the presence of single-stranded DNA, the ATP-dependent uptake of single-stranded DNA by duplex DNA, and the ATP-dependent hybridization of homologous single-stranded DNAs. It interacts with LexA causing its activation and leading to its autocatalytic cleavage. The polypeptide is Protein RecA (Salmonella agona (strain SL483)).